The following is a 600-amino-acid chain: Elongation factor 4 (600 aa).

The tr-type G domain maps to 4-186 (DTIRNFSIIA…EIVKKIPPPE (183 aa)). Residues 16–21 (DHGKST) and 133–136 (NKID) each bind GTP.

Belongs to the TRAFAC class translation factor GTPase superfamily. Classic translation factor GTPase family. LepA subfamily.

Its subcellular location is the cell inner membrane. The enzyme catalyses GTP + H2O = GDP + phosphate + H(+). Its function is as follows. Required for accurate and efficient protein synthesis under certain stress conditions. May act as a fidelity factor of the translation reaction, by catalyzing a one-codon backward translocation of tRNAs on improperly translocated ribosomes. Back-translocation proceeds from a post-translocation (POST) complex to a pre-translocation (PRE) complex, thus giving elongation factor G a second chance to translocate the tRNAs correctly. Binds to ribosomes in a GTP-dependent manner. In Geobacter sulfurreducens (strain ATCC 51573 / DSM 12127 / PCA), this protein is Elongation factor 4.